A 173-amino-acid chain; its full sequence is Large ribosomal subunit protein uL16 (173 aa).

Belongs to the universal ribosomal protein uL16 family.

This chain is Large ribosomal subunit protein uL16, found in Methanosarcina mazei (strain ATCC BAA-159 / DSM 3647 / Goe1 / Go1 / JCM 11833 / OCM 88) (Methanosarcina frisia).